A 366-amino-acid polypeptide reads, in one-letter code: MSTKQHSAKDELLYLNKAVVFGSGAFGTALAMVLSKKCREVCVWHMNEEEVRLVNEKRENVLFLKGVQLASNITFTSDVEKAYNGAEIILFVIPTQFLRGFFEKSGGNLIAYAKEKQVPVLVCTKGIERSTLKFPAEIIGEFLPSPLLSVLAGPSFAIEVATGVFTCVSIASADINVARRLQRIMSTGDRSFVCWATTDTVGCEVASAVKNVLAIGSGVANGLGMGLNARAALIMRGLLEIRDLTAALGGDGSAVFGLAGLGDLQLTCSSELSRNFTVGKKLGKGLPIEEIQRTSKAVAEGVATADPLMRLAKQLKVKMPLCHQIYEIVYKKKNPRDALADLLSCGLQDEGLPPLFKRSASTPSKL.

Residues 22-27 (GSGAFG), Phe-97, Lys-125, and Ala-157 contribute to the NAD(+) site. Lys-125 provides a ligand contact to substrate. Lys-210 (proton acceptor) is an active-site residue. 3 residues coordinate NAD(+): Arg-274, Val-298, and Glu-300. 274 to 275 (RN) is a binding site for substrate. Positions 364 to 366 (SKL) match the Microbody targeting signal motif.

This sequence belongs to the NAD-dependent glycerol-3-phosphate dehydrogenase family. In terms of assembly, homodimer.

It localises to the glycosome. The catalysed reaction is sn-glycerol 3-phosphate + NAD(+) = dihydroxyacetone phosphate + NADH + H(+). The polypeptide is Glycerol-3-phosphate dehydrogenase [NAD(+)], glycosomal (GPD) (Leishmania mexicana).